Here is a 348-residue protein sequence, read N- to C-terminus: [LysW]-L-2-aminoadipate 6-phosphate reductase (348 aa).

An NADP(+)-binding site is contributed by Ser14–Ala17. Cys151 is an active-site residue. Asn315 is an NADP(+) binding site.

This sequence belongs to the NAGSA dehydrogenase family. Type 1 subfamily. LysY sub-subfamily.

The protein resides in the cytoplasm. It catalyses the reaction [amino-group carrier protein]-C-terminal-N-(1-carboxy-5-oxopentan-1-yl)-L-glutamine + phosphate + NADP(+) = [amino-group carrier protein]-C-terminal-N-(1-carboxy-5-phosphooxy-5-oxopentan-1-yl)-L-glutamine + NADPH + H(+). Its pathway is amino-acid biosynthesis; L-lysine biosynthesis via AAA pathway; L-lysine from L-alpha-aminoadipate (Thermus route): step 3/5. In terms of biological role, catalyzes the NADPH-dependent reduction of [LysW]-aminoadipate 6-phosphate to yield [LysW]-aminoadipate 6-semialdehyde. The chain is [LysW]-L-2-aminoadipate 6-phosphate reductase from Deinococcus radiodurans (strain ATCC 13939 / DSM 20539 / JCM 16871 / CCUG 27074 / LMG 4051 / NBRC 15346 / NCIMB 9279 / VKM B-1422 / R1).